The following is a 194-amino-acid chain: Peptidyl-tRNA hydrolase (194 aa).

Histidine 22 acts as the Proton acceptor in catalysis. The tRNA site is built by tyrosine 67, asparagine 69, and asparagine 115.

It belongs to the PTH family. Monomer.

The protein resides in the cytoplasm. The enzyme catalyses an N-acyl-L-alpha-aminoacyl-tRNA + H2O = an N-acyl-L-amino acid + a tRNA + H(+). Its function is as follows. Hydrolyzes ribosome-free peptidyl-tRNAs (with 1 or more amino acids incorporated), which drop off the ribosome during protein synthesis, or as a result of ribosome stalling. In terms of biological role, catalyzes the release of premature peptidyl moieties from peptidyl-tRNA molecules trapped in stalled 50S ribosomal subunits, and thus maintains levels of free tRNAs and 50S ribosomes. This is Peptidyl-tRNA hydrolase from Granulibacter bethesdensis (strain ATCC BAA-1260 / CGDNIH1).